A 359-amino-acid chain; its full sequence is Phosphatidylglycerol--prolipoprotein diacylglyceryl transferase (359 aa).

The next 4 membrane-spanning stretches (helical) occupy residues 24–44 (VALR…IVWG), 58–78 (VLDI…LYHV), 98–118 (VWQG…GAWI), and 124–144 (GIPL…AQAI). R146 provides a ligand contact to a 1,2-diacyl-sn-glycero-3-phospho-(1'-sn-glycerol). 3 helical membrane-spanning segments follow: residues 193–213 (FVVH…VLLL), 222–243 (IGHG…FWIE), and 258–278 (VNSF…FAAT). Residues 284–359 (PAELRPADGG…IDSKKDDAND (76 aa)) are disordered. Basic and acidic residues predominate over residues 306–323 (IAQKEPEKNVEDAGKDEG). Over residues 336–349 (ASTASTGGEAGTKT) the composition is skewed to low complexity. Residues 350-359 (IDSKKDDAND) show a composition bias toward basic and acidic residues.

Belongs to the Lgt family.

Its subcellular location is the cell membrane. The catalysed reaction is L-cysteinyl-[prolipoprotein] + a 1,2-diacyl-sn-glycero-3-phospho-(1'-sn-glycerol) = an S-1,2-diacyl-sn-glyceryl-L-cysteinyl-[prolipoprotein] + sn-glycerol 1-phosphate + H(+). It participates in protein modification; lipoprotein biosynthesis (diacylglyceryl transfer). Catalyzes the transfer of the diacylglyceryl group from phosphatidylglycerol to the sulfhydryl group of the N-terminal cysteine of a prolipoprotein, the first step in the formation of mature lipoproteins. This chain is Phosphatidylglycerol--prolipoprotein diacylglyceryl transferase, found in Rhodococcus jostii (strain RHA1).